Here is a 787-residue protein sequence, read N- to C-terminus: LPS-assembly protein LptD (787 aa).

The segment at 1–78 (MAAGLPPLVV…AAGAAPAESG (78 aa)) is disordered. Residues 59–78 (LPPVGTPAEPAAGAAPAESG) are compositionally biased toward low complexity.

The protein belongs to the LptD family. In terms of assembly, component of the lipopolysaccharide transport and assembly complex. Interacts with LptE and LptA.

Functionally, together with LptE, is involved in the assembly of lipopolysaccharide (LPS) at the surface of the outer membrane. The protein is LPS-assembly protein LptD of Aromatoleum aromaticum (strain DSM 19018 / LMG 30748 / EbN1) (Azoarcus sp. (strain EbN1)).